Reading from the N-terminus, the 498-residue chain is ATP synthase subunit beta, chloroplastic (498 aa).

Residue T6 is modified to Phosphothreonine. S13 carries the post-translational modification Phosphoserine. G172–T179 contacts ATP.

This sequence belongs to the ATPase alpha/beta chains family. In terms of assembly, F-type ATPases have 2 components, CF(1) - the catalytic core - and CF(0) - the membrane proton channel. CF(1) has five subunits: alpha(3), beta(3), gamma(1), delta(1), epsilon(1). CF(0) has four main subunits: a(1), b(1), b'(1) and c(9-12).

The protein localises to the plastid. It is found in the chloroplast thylakoid membrane. The catalysed reaction is ATP + H2O + 4 H(+)(in) = ADP + phosphate + 5 H(+)(out). In terms of biological role, produces ATP from ADP in the presence of a proton gradient across the membrane. The catalytic sites are hosted primarily by the beta subunits. The sequence is that of ATP synthase subunit beta, chloroplastic from Crucihimalaya wallichii (Rock-cress).